A 95-amino-acid polypeptide reads, in one-letter code: Co-chaperonin GroES (95 aa).

Belongs to the GroES chaperonin family. As to quaternary structure, heptamer of 7 subunits arranged in a ring. Interacts with the chaperonin GroEL.

Its subcellular location is the cytoplasm. Together with the chaperonin GroEL, plays an essential role in assisting protein folding. The GroEL-GroES system forms a nano-cage that allows encapsulation of the non-native substrate proteins and provides a physical environment optimized to promote and accelerate protein folding. GroES binds to the apical surface of the GroEL ring, thereby capping the opening of the GroEL channel. The sequence is that of Co-chaperonin GroES from Caldicellulosiruptor bescii (strain ATCC BAA-1888 / DSM 6725 / KCTC 15123 / Z-1320) (Anaerocellum thermophilum).